The chain runs to 618 residues: UvrABC system protein C (618 aa).

One can recognise a GIY-YIG domain in the interval 20 to 98 (TAPGVYRMYA…IKSLSPRYNV (79 aa)). The UVR domain occupies 207 to 242 (DQLGEEIMHSMQQASEALEFERAARLRDLLSSLRSM).

This sequence belongs to the UvrC family. In terms of assembly, interacts with UvrB in an incision complex.

The protein localises to the cytoplasm. The UvrABC repair system catalyzes the recognition and processing of DNA lesions. UvrC both incises the 5' and 3' sides of the lesion. The N-terminal half is responsible for the 3' incision and the C-terminal half is responsible for the 5' incision. The chain is UvrABC system protein C from Xanthomonas campestris pv. campestris (strain B100).